The following is a 1503-amino-acid chain: Protein Skeletor, isoforms D/E (1503 aa).

Positions 1–28 (MLAMKDKPWLLLFGLLAALSCLASFGDA) are cleaved as a signal peptide. DM13 domains lie at 34–143 (GTKI…VSIP) and 151–258 (PQKI…VRLP). In terms of domain architecture, DOMON spans 287-419 (LAFEVRWAVA…GAESVVWAIG (133 aa)). Disordered stretches follow at residues 451-491 (PLPE…NVEP), 830-857 (NPNLNPNHPNQNPIPNPHQKPNVTPTEI), 1086-1106 (IFNQPGGKGKGDQKPKASSVS), and 1426-1503 (EFRG…GRRA). Over residues 830 to 840 (NPNLNPNHPNQ) the composition is skewed to low complexity. A compositionally biased stretch (low complexity) spans 1452–1491 (SSSSGSTIYPYSSSTGASTSTVSSSASSPLSSSSLRPIST).

In terms of assembly, interacts with Chro and Mgtor as part of a macromolecular complex forming the spindle matrix. Chro colocalizes with Skeletor (Skel) on the chromosomes at interphase and on spindle during metaphase.

Its subcellular location is the cytoplasm. It localises to the cytoskeleton. The protein resides in the spindle. The protein localises to the nucleus. It is found in the nucleolus. Its subcellular location is the chromosome. In terms of biological role, provides structural support to stabilize and organize the microtubule spindle during mitosis (within embryonic somatic cells) and meiosis (within spermatocytes). The role in mitosis regulation depends on the Ran pathway. This chain is Protein Skeletor, isoforms D/E, found in Drosophila melanogaster (Fruit fly).